Reading from the N-terminus, the 237-residue chain is Putative N-acetylmuramoyl-L-alanine amidase (237 aa).

Positions 7–225 constitute a MurNAc-LAA domain; the sequence is ILIDAGHGGY…IANSIYLGLK (219 aa).

Belongs to the N-acetylmuramoyl-L-alanine amidase 3 family.

Its subcellular location is the secreted. It catalyses the reaction Hydrolyzes the link between N-acetylmuramoyl residues and L-amino acid residues in certain cell-wall glycopeptides.. In terms of biological role, cell-wall hydrolase involved in septum cleavage during cell division. This chain is Putative N-acetylmuramoyl-L-alanine amidase (amiB), found in Buchnera aphidicola subsp. Acyrthosiphon pisum (strain APS) (Acyrthosiphon pisum symbiotic bacterium).